Reading from the N-terminus, the 364-residue chain is Phosrestin-2 (364 aa).

This sequence belongs to the arrestin family. Phosphorylated, but does not undergo light-induced phosphorylation. As to expression, expressed specifically and abundantly in photoreceptor cells in retina and ocelli.

It localises to the cell projection. The protein localises to the rhabdomere. Functionally, regulates photoreceptor cell deactivation. Arr1 and Arr2 proteins are mediators of rhodopsin inactivation and are essential for the termination of the phototransduction cascade. Involved in regulating normal cycles of per nuclear accumulation in brain circadian neurons and thus is important for normal circadian behavior. In the dark, functions with Arr2 to promote the formation of cytosolic Bdbt foci, which are required for dco localization to photoreceptor nuclei where it phosphorylates and activates degradation of per. The sequence is that of Phosrestin-2 (Arr1) from Drosophila melanogaster (Fruit fly).